The sequence spans 141 residues: Hemoglobin subunit alpha (141 aa).

Residues 1 to 141 (VLSPADKKNV…VSTVLTSKYR (141 aa)) form the Globin domain. Serine 3 bears the Phosphoserine mark. An N6-succinyllysine mark is found at lysine 7 and lysine 11. Lysine 16 is modified (N6-acetyllysine; alternate). Lysine 16 carries the post-translational modification N6-succinyllysine; alternate. Tyrosine 24 bears the Phosphotyrosine mark. Serine 35 is modified (phosphoserine). Lysine 40 is modified (N6-succinyllysine). Serine 49 carries the post-translational modification Phosphoserine. Histidine 58 lines the O2 pocket. Residue histidine 87 participates in heme b binding. Position 102 is a phosphoserine (serine 102). At threonine 108 the chain carries Phosphothreonine. Phosphoserine is present on residues serine 124 and serine 131. Threonine 134 and threonine 137 each carry phosphothreonine. Serine 138 carries the post-translational modification Phosphoserine.

This sequence belongs to the globin family. In terms of assembly, heterotetramer of two alpha chains and two beta chains. In terms of tissue distribution, red blood cells.

Its function is as follows. Involved in oxygen transport from the lung to the various peripheral tissues. Functionally, hemopressin acts as an antagonist peptide of the cannabinoid receptor CNR1. Hemopressin-binding efficiently blocks cannabinoid receptor CNR1 and subsequent signaling. The sequence is that of Hemoglobin subunit alpha (HBA) from Spermophilus citellus (European ground squirrel).